Consider the following 87-residue polypeptide: Putative autophagy-related protein 8E (87 aa).

Over residues 1–14 (MEERRKEKGKEGRR) the composition is skewed to basic and acidic residues. Positions 1-30 (MEERRKEKGKEGRRGKATGHSVDKFSRSNL) are disordered. Glycine 87 carries Phosphatidylethanolamine amidated glycine lipidation.

This sequence belongs to the ATG8 family. In terms of assembly, interacts with ATG4. In terms of processing, the C-terminal Gly is amidated with phosphatidylethanolamine by an activating system similar to that for ubiquitin.

It localises to the cytoplasmic vesicle. The protein resides in the autophagosome membrane. The protein localises to the vacuole membrane. It is found in the cytoplasm. Its subcellular location is the cytoskeleton. Ubiquitin-like modifier involved in autophagosomes formation. May mediate the delivery of the autophagosomes to the vacuole via the microtubule cytoskeleton. The polypeptide is Putative autophagy-related protein 8E (ATG8E) (Oryza sativa subsp. japonica (Rice)).